Consider the following 246-residue polypeptide: 1-(5-phosphoribosyl)-5-[(5-phosphoribosylamino)methylideneamino] imidazole-4-carboxamide isomerase (246 aa).

Residue aspartate 8 is the Proton acceptor of the active site. Aspartate 131 functions as the Proton donor in the catalytic mechanism.

Belongs to the HisA/HisF family.

The protein resides in the cytoplasm. It carries out the reaction 1-(5-phospho-beta-D-ribosyl)-5-[(5-phospho-beta-D-ribosylamino)methylideneamino]imidazole-4-carboxamide = 5-[(5-phospho-1-deoxy-D-ribulos-1-ylimino)methylamino]-1-(5-phospho-beta-D-ribosyl)imidazole-4-carboxamide. Its pathway is amino-acid biosynthesis; L-histidine biosynthesis; L-histidine from 5-phospho-alpha-D-ribose 1-diphosphate: step 4/9. This Albidiferax ferrireducens (strain ATCC BAA-621 / DSM 15236 / T118) (Rhodoferax ferrireducens) protein is 1-(5-phosphoribosyl)-5-[(5-phosphoribosylamino)methylideneamino] imidazole-4-carboxamide isomerase.